Here is a 1059-residue protein sequence, read N- to C-terminus: Carbamoyl phosphate synthase large chain (1059 aa).

The carboxyphosphate synthetic domain stretch occupies residues 1–401; sequence MPKRQDISKI…AMLKAVRSLE (401 aa). The ATP site is built by arginine 129, arginine 169, glycine 175, glycine 176, arginine 208, isoleucine 210, glutamate 215, glycine 241, isoleucine 242, histidine 243, glutamine 284, and glutamate 298. In terms of domain architecture, ATP-grasp 1 spans 133 to 327; sequence KALMERLNEP…IAKMAAKIAV (195 aa). The Mg(2+) site is built by glutamine 284, glutamate 298, and asparagine 300. Residues glutamine 284, glutamate 298, and asparagine 300 each coordinate Mn(2+). An oligomerization domain region spans residues 402–546; the sequence is IGAIGLDDIT…YATYEQENES (145 aa). The tract at residues 547–929 is carbamoyl phosphate synthetic domain; the sequence is IISTKKSVLV…ALYKAFIASN (383 aa). Positions 671–861 constitute an ATP-grasp 2 domain; the sequence is DQVIKELALP…LAQLATRVML (191 aa). The ATP site is built by arginine 707, serine 746, leucine 748, glutamate 752, glycine 777, valine 778, histidine 779, serine 780, glutamine 820, and glutamate 832. Positions 820, 832, and 834 each coordinate Mg(2+). Residues glutamine 820, glutamate 832, and asparagine 834 each contribute to the Mn(2+) site. Positions 930–1059 constitute an MGS-like domain; it reads IKVPRYGNVL…SRSFTVKEMH (130 aa). The segment at 930–1059 is allosteric domain; sequence IKVPRYGNVL…SRSFTVKEMH (130 aa).

Belongs to the CarB family. In terms of assembly, composed of two chains; the small (or glutamine) chain promotes the hydrolysis of glutamine to ammonia, which is used by the large (or ammonia) chain to synthesize carbamoyl phosphate. Tetramer of heterodimers (alpha,beta)4. Mg(2+) is required as a cofactor. Requires Mn(2+) as cofactor.

The catalysed reaction is hydrogencarbonate + L-glutamine + 2 ATP + H2O = carbamoyl phosphate + L-glutamate + 2 ADP + phosphate + 2 H(+). It carries out the reaction hydrogencarbonate + NH4(+) + 2 ATP = carbamoyl phosphate + 2 ADP + phosphate + 2 H(+). It participates in amino-acid biosynthesis; L-arginine biosynthesis; carbamoyl phosphate from bicarbonate: step 1/1. Its pathway is pyrimidine metabolism; UMP biosynthesis via de novo pathway; (S)-dihydroorotate from bicarbonate: step 1/3. In terms of biological role, large subunit of the glutamine-dependent carbamoyl phosphate synthetase (CPSase). CPSase catalyzes the formation of carbamoyl phosphate from the ammonia moiety of glutamine, carbonate, and phosphate donated by ATP, constituting the first step of 2 biosynthetic pathways, one leading to arginine and/or urea and the other to pyrimidine nucleotides. The large subunit (synthetase) binds the substrates ammonia (free or transferred from glutamine from the small subunit), hydrogencarbonate and ATP and carries out an ATP-coupled ligase reaction, activating hydrogencarbonate by forming carboxy phosphate which reacts with ammonia to form carbamoyl phosphate. In Leuconostoc mesenteroides subsp. mesenteroides (strain ATCC 8293 / DSM 20343 / BCRC 11652 / CCM 1803 / JCM 6124 / NCDO 523 / NBRC 100496 / NCIMB 8023 / NCTC 12954 / NRRL B-1118 / 37Y), this protein is Carbamoyl phosphate synthase large chain.